The chain runs to 226 residues: Uracil-DNA glycosylase (226 aa).

Residue aspartate 64 is the Proton acceptor of the active site.

Belongs to the uracil-DNA glycosylase (UDG) superfamily. UNG family.

Its subcellular location is the cytoplasm. The catalysed reaction is Hydrolyzes single-stranded DNA or mismatched double-stranded DNA and polynucleotides, releasing free uracil.. Its function is as follows. Excises uracil residues from the DNA which can arise as a result of misincorporation of dUMP residues by DNA polymerase or due to deamination of cytosine. The protein is Uracil-DNA glycosylase of Vibrio vulnificus (strain CMCP6).